Here is a 478-residue protein sequence, read N- to C-terminus: uncharacterized protein (478 aa).

The region spanning 174–366 (RQVLAAAGVP…LIGEHIKLAI (193 aa)) is the ATP-grasp domain. 214–219 (GSGSRG) provides a ligand contact to ATP. The active site involves R339.

This is an uncharacterized protein from Sinorhizobium fredii (strain NBRC 101917 / NGR234).